The sequence spans 182 residues: Inner membrane assembly complex subunit 17 (182 aa).

A mitochondrion-targeting transit peptide spans 1-45; sequence MLKRRSNALITLSRTKLFPITTVAYYHRRLLNQQRRAVSTSPKKE. Residues 46–107 are Mitochondrial matrix-facing; sequence IKSLEDLANL…EIPVKRFIRP (62 aa). The helical transmembrane segment at 108-127 threads the bilayer; sequence LWMFILMGSSVYLLLHFSWW. A coiled-coil region spans residues 128-158; that stretch reads KLEHEERESQLKKEVEILEHQLNELIVQDKT. Residues 128 to 182 are Mitochondrial intermembrane-facing; the sequence is KLEHEERESQLKKEVEILEHQLNELIVQDKTHNTSRGKGSNESTHMKPWYRRWFW.

This sequence belongs to the INA17 family. Component of the inner membrane assembly (INA) complex, composed of INA17 and INA22. Interacts with a subset of F(1)F(0)-ATP synthase subunits of the F(1)-domain and the peripheral stalk.

Its subcellular location is the mitochondrion inner membrane. Component of the INA complex (INAC) that promotes the biogenesis of mitochondrial F(1)F(0)-ATP synthase. INAC facilitates the assembly of the peripheral stalk and promotes the assembly of the catalytic F(1)-domain with the membrane-embedded F(0)-domain. The protein is Inner membrane assembly complex subunit 17 of Saccharomyces cerevisiae (strain RM11-1a) (Baker's yeast).